The following is a 198-amino-acid chain: Glycerol-3-phosphate acyltransferase (198 aa).

A run of 5 helical transmembrane segments spans residues 1–21, 52–72, 81–101, 115–135, and 153–173; these read MILI…IPAA, GPAL…VGLA, WTAL…FLGF, LALD…CIWL, and LAAA…LAAL.

The protein belongs to the PlsY family. Probably interacts with PlsX.

It localises to the cell membrane. The catalysed reaction is an acyl phosphate + sn-glycerol 3-phosphate = a 1-acyl-sn-glycero-3-phosphate + phosphate. It functions in the pathway lipid metabolism; phospholipid metabolism. Functionally, catalyzes the transfer of an acyl group from acyl-phosphate (acyl-PO(4)) to glycerol-3-phosphate (G3P) to form lysophosphatidic acid (LPA). This enzyme utilizes acyl-phosphate as fatty acyl donor, but not acyl-CoA or acyl-ACP. The sequence is that of Glycerol-3-phosphate acyltransferase from Deinococcus geothermalis (strain DSM 11300 / CIP 105573 / AG-3a).